An 817-amino-acid polypeptide reads, in one-letter code: Dolichyl-phosphate-mannose--protein mannosyltransferase 1 (817 aa).

Serine 2 carries the N-acetylserine modification. Residues 2 to 50 are Cytoplasmic-facing; the sequence is SEEKTYKRVEQDDPVPELDIKQGPVRPFIVTDPSAELASLRTMVTLKEK. Residues 51-70 form a helical membrane-spanning segment; the sequence is LLVACLAVFTAVIRLHGLAW. At 71 to 135 the chain is on the lumenal side; that stretch reads PDSVVFDEVH…DSFPSTTPYV (65 aa). A helical membrane pass occupies residues 136 to 154; sequence LMRFFSASLGALTVILMYM. Over 155-179 the chain is Cytoplasmic; that stretch reads TLRYSGVRMWVALMSAICFAVENSY. Residues 180 to 200 form a helical membrane-spanning segment; sequence VTISRYILLDAPLMFFIAAAV. The Lumenal segment spans residues 201–234; sequence YSFKKYEMYPANSLNAYKSLLATGIALGMASSSK. A helical membrane pass occupies residues 235-259; it reads WVGLFTVTWVGLLCIWRLWFMIGDL. The Cytoplasmic portion of the chain corresponds to 260–273; that stretch reads TKSSKSIFKVAFAK. Residues 274-291 form a helical membrane-spanning segment; the sequence is LAFLLGVPFALYLVFFYI. The Lumenal segment spans residues 292 to 584; it reads HFQSLTLDGD…GENNRNVYLL (293 aa). MIR domains are found at residues 324–378, 388–448, and 459–514; these read VADV…LELY, FQNL…VEID, and ERVI…VENN. 2 N-linked (GlcNAc...) asparagine glycosylation sites follow: asparagine 390 and asparagine 513. A helical membrane pass occupies residues 585-605; sequence GNAIVWWAVTAFIGIFGLIVI. At 606–685 the chain is on the cytoplasmic side; sequence TELFSWQLGK…SYVFRSKRQM (80 aa). A helical transmembrane segment spans residues 686–710; the sequence is GYAVVITFLAASVYFFKSFSPIIYG. Over 711–817 the chain is Lumenal; that stretch reads TPWTQELCQK…LKVEKRAVLE (107 aa). Residue asparagine 743 is glycosylated (N-linked (GlcNAc...) asparagine).

Belongs to the glycosyltransferase 39 family. In terms of assembly, PMT1 and PMT2 form a functional heterodimer. The complex interacts with endoplasmic reticulum proteins EMP24, ERV25, ERP1, ERP2, CDC48, HRD1, USA1, YOS9, ERO1, PDI1, UBR1, Cue4, DFM1 and TED1. Forms also a minor complex with PMT3.

Its subcellular location is the endoplasmic reticulum membrane. It catalyses the reaction a di-trans,poly-cis-dolichyl beta-D-mannosyl phosphate + L-seryl-[protein] = 3-O-(alpha-D-mannosyl)-L-seryl-[protein] + a di-trans,poly-cis-dolichyl phosphate + H(+). It carries out the reaction a di-trans,poly-cis-dolichyl beta-D-mannosyl phosphate + L-threonyl-[protein] = 3-O-(alpha-D-mannosyl)-L-threonyl-[protein] + a di-trans,poly-cis-dolichyl phosphate + H(+). The protein operates within protein modification; protein glycosylation. Functionally, protein O-mannosyltransferase involved in O-glycosylation which is essential for cell wall rigidity. Forms a heterodimeric complex with PMT2 and more rarely with PMT3 to transfer mannose from Dol-P-mannose to Ser or Thr residues on proteins. The PMT1-PMT2 complex participates in oxidative protein folding, ER-associated protein degradation (ERAD), as well as ER export. Required for incorporation of proteins in the cell wall. The polypeptide is Dolichyl-phosphate-mannose--protein mannosyltransferase 1 (Saccharomyces cerevisiae (strain ATCC 204508 / S288c) (Baker's yeast)).